Here is a 521-residue protein sequence, read N- to C-terminus: Nitric oxide reductase transcription regulator NorR2 (521 aa).

Asp-56 is modified (4-aspartylphosphate). The Sigma-54 factor interaction domain maps to 193 to 422 (IIGQSEAIAN…LEHVISRAAL (230 aa)). Residues 221–228 (GETGVGKE) and 293–302 (EVGELPLAIQ) each bind ATP. Residues 497-516 (WAQAARQLGIDASNLHKLAR) constitute a DNA-binding region (H-T-H motif).

The protein operates within nitrogen metabolism; nitrate reduction (denitrification) [regulation]. In terms of biological role, required for the nitric oxide (NO) induced expression of NO reductase. Not required for expression of 2 other pathway members, nitrate reductase (nirS) and nitrous oxide reductase (nosZ). This Cupriavidus necator (strain ATCC 17699 / DSM 428 / KCTC 22496 / NCIMB 10442 / H16 / Stanier 337) (Ralstonia eutropha) protein is Nitric oxide reductase transcription regulator NorR2 (norR2).